An 81-amino-acid chain; its full sequence is RNA-binding protein Hfq (81 aa).

One can recognise a Sm domain in the interval Asp-11–Ile-71.

This sequence belongs to the Hfq family. As to quaternary structure, homohexamer.

Functionally, RNA chaperone that binds small regulatory RNA (sRNAs) and mRNAs to facilitate mRNA translational regulation in response to envelope stress, environmental stress and changes in metabolite concentrations. Also binds with high specificity to tRNAs. This is RNA-binding protein Hfq from Clostridium beijerinckii (strain ATCC 51743 / NCIMB 8052) (Clostridium acetobutylicum).